Reading from the N-terminus, the 284-residue chain is 16S rRNA (guanine(1405)-N(7))-methyltransferase (284 aa).

Residues Tyr73, 111-113 (HAS), Arg117, Ala142, Asp165, 191-192 (DL), Leu208, and Gln217 each bind S-adenosyl-L-methionine.

This sequence belongs to the methyltransferase superfamily. Aminoglycoside resistance family.

The enzyme catalyses guanosine(1405) in 16S rRNA + S-adenosyl-L-methionine = N(7)-methylguanosine(1405) in 16S rRNA + S-adenosyl-L-homocysteine. In terms of biological role, specifically methylates the N(7) position of guanine 1405 in 16S rRNA. Confers resistance to various aminoglycosides, including gentamicin and kanamycin. The sequence is that of 16S rRNA (guanine(1405)-N(7))-methyltransferase (Krm) from Frankia casuarinae (strain DSM 45818 / CECT 9043 / HFP020203 / CcI3).